Consider the following 174-residue polypeptide: Austinoid biosynthesis clusters protein H (174 aa).

It belongs to the trt14 isomerase family. In terms of assembly, homodimer.

The protein operates within secondary metabolite biosynthesis; terpenoid biosynthesis. In terms of biological role, part of the gene cluster B that mediates the biosynthesis of austinol and dehydroaustinol, two fungal meroterpenoids. The first step of the pathway is the synthesis of 3,5-dimethylorsellinic acid by the polyketide synthase ausA. 3,5-dimethylorsellinic acid is then prenylated by the polyprenyl transferase ausN. Further epoxidation by the FAD-dependent monooxygenase ausM and cyclization by the probable terpene cyclase ausL lead to the formation of protoaustinoid A. Protoaustinoid A is then oxidized to spiro-lactone preaustinoid A3 by the combined action of the FAD-binding monooxygenases ausB and ausC, and the dioxygenase ausE. Acid-catalyzed keto-rearrangement and ring contraction of the tetraketide portion of preaustinoid A3 by ausJ lead to the formation of preaustinoid A4. The aldo-keto reductase ausK, with the help of ausH, is involved in the next step by transforming preaustinoid A4 into isoaustinone which is in turn hydroxylated by the P450 monooxygenase ausI to form austinolide. Finally, the cytochrome P450 monooxygenase ausG modifies austinolide to austinol. Austinol can be further modified to dehydroaustinol which forms a diffusible complex with diorcinol that initiates conidiation. Due to genetic rearrangements of the clusters and the subsequent loss of some enzymes, the end products of the Emericella nidulans austinoid biosynthesis clusters are austinol and dehydroaustinol, even if additional enzymes, such as the O-acetyltransferase ausQ and the cytochrome P450 monooxygenase ausR are still functional. In Emericella nidulans (strain FGSC A4 / ATCC 38163 / CBS 112.46 / NRRL 194 / M139) (Aspergillus nidulans), this protein is Austinoid biosynthesis clusters protein H.